A 191-amino-acid polypeptide reads, in one-letter code: dTTP/UTP pyrophosphatase (191 aa).

Aspartate 68 serves as the catalytic Proton acceptor.

It belongs to the Maf family. YhdE subfamily. A divalent metal cation serves as cofactor.

It is found in the cytoplasm. The catalysed reaction is dTTP + H2O = dTMP + diphosphate + H(+). It carries out the reaction UTP + H2O = UMP + diphosphate + H(+). Functionally, nucleoside triphosphate pyrophosphatase that hydrolyzes dTTP and UTP. May have a dual role in cell division arrest and in preventing the incorporation of modified nucleotides into cellular nucleic acids. The protein is dTTP/UTP pyrophosphatase of Thermoanaerobacter pseudethanolicus (strain ATCC 33223 / 39E) (Clostridium thermohydrosulfuricum).